The sequence spans 86 residues: Photosystem I reaction center subunit PsaK (86 aa).

The next 2 helical transmembrane spans lie at 15–35 and 57–77; these read SWSI…IGLG and GLPE…GAII.

Belongs to the PsaG/PsaK family.

The protein localises to the plastid. It localises to the chloroplast thylakoid membrane. This chain is Photosystem I reaction center subunit PsaK, found in Gracilaria tenuistipitata var. liui (Red alga).